A 256-amino-acid polypeptide reads, in one-letter code: Proteasome subunit alpha (256 aa).

Residues 235-256 (ELDSNGSDGNGDAPELNGGSSD) are disordered.

It belongs to the peptidase T1A family. In terms of assembly, the 20S proteasome core is composed of 14 alpha and 14 beta subunits that assemble into four stacked heptameric rings, resulting in a barrel-shaped structure. The two inner rings, each composed of seven catalytic beta subunits, are sandwiched by two outer rings, each composed of seven alpha subunits. The catalytic chamber with the active sites is on the inside of the barrel. Has a gated structure, the ends of the cylinder being occluded by the N-termini of the alpha-subunits. Is capped by the proteasome-associated ATPase, ARC.

It localises to the cytoplasm. Its pathway is protein degradation; proteasomal Pup-dependent pathway. Its activity is regulated as follows. The formation of the proteasomal ATPase ARC-20S proteasome complex, likely via the docking of the C-termini of ARC into the intersubunit pockets in the alpha-rings, may trigger opening of the gate for substrate entry. Interconversion between the open-gate and close-gate conformations leads to a dynamic regulation of the 20S proteasome proteolysis activity. Functionally, component of the proteasome core, a large protease complex with broad specificity involved in protein degradation. This Mycolicibacterium paratuberculosis (strain ATCC BAA-968 / K-10) (Mycobacterium paratuberculosis) protein is Proteasome subunit alpha.